The primary structure comprises 150 residues: SsrA-binding protein (150 aa).

It belongs to the SmpB family.

It localises to the cytoplasm. In terms of biological role, required for rescue of stalled ribosomes mediated by trans-translation. Binds to transfer-messenger RNA (tmRNA), required for stable association of tmRNA with ribosomes. tmRNA and SmpB together mimic tRNA shape, replacing the anticodon stem-loop with SmpB. tmRNA is encoded by the ssrA gene; the 2 termini fold to resemble tRNA(Ala) and it encodes a 'tag peptide', a short internal open reading frame. During trans-translation Ala-aminoacylated tmRNA acts like a tRNA, entering the A-site of stalled ribosomes, displacing the stalled mRNA. The ribosome then switches to translate the ORF on the tmRNA; the nascent peptide is terminated with the 'tag peptide' encoded by the tmRNA and targeted for degradation. The ribosome is freed to recommence translation, which seems to be the essential function of trans-translation. This chain is SsrA-binding protein, found in Rubrobacter xylanophilus (strain DSM 9941 / JCM 11954 / NBRC 16129 / PRD-1).